Reading from the N-terminus, the 971-residue chain is Nuclear factor NF-kappa-B p110 subunit (971 aa).

Low complexity predominate over residues 23-41 (STSGYSSSTSPNSTNRSFS). The segment at 23–46 (STSGYSSSTSPNSTNRSFSPAHSP) is disordered. The region spanning 147 to 339 (KHVPQLRIVE…NAINNRKSAQ (193 aa)) is the RHD domain. Serine 431 bears the Phosphoserine; by PKA mark. The Nuclear localization signal signature appears at 452-457 (SRKRRR). The segment at 453–496 (RKRRRTGSSANSSSSGTESSNNSLDLPKTLGLAQPPNGLPNLSQ) is disordered. The span at 460 to 475 (SSANSSSSGTESSNNS) shows a compositional bias: low complexity. A Phosphothreonine modification is found at threonine 620. Position 626 is a phosphotyrosine (tyrosine 626). 5 ANK repeats span residues 640–669 (DGDSALHVACQQDRAHYIRPLLGMGCNPNL), 673–702 (AGNTPLHVAVKEEHLSCVESFLNGVPTVQL), 710–740 (DGLTPLHMAIRQNKYDVAKKLISYDRTSISV), 745–775 (DGNNALHMAVLEQSVELLVLILDAQNENLTD), and 783–812 (AGHTPLELAERKANDRVVQLLKNVYPEKGE). Residues 826–877 (IDSSSDESSDAGQLEIKSEEMDIETKDEDSVELDLSSGPRRQKDESSRDTEM) form a disordered region. The segment covering 866-877 (RQKDESSRDTEM) has biased composition (basic and acidic residues). Phosphoserine is present on serine 950.

Rel-p68 subunit interacts with Dredd. Interacts with DMAP1. Interacts with akirin; interaction is immune stimulation-dependent; activates selected rel target gene promoters. Phosphorylated by lipopolysaccharide (LPS)-activated I-kappa-B kinase complex before being cleaved. Rel-p110 subunit is cleaved within seconds of an immune challenge into Rel-p49 subunit and Rel-p68 subunit. Rel-p110 subunit reappears after 45 minutes.

The protein resides in the nucleus. Its subcellular location is the cytoplasm. Its function is as follows. Transcription factor that plays a key role in the humoral immune response as part of the peptidoglycan recognition protein (IMD) signaling pathway. Rel-p68 subunit translocates to the nucleus where it binds to the promoter of the Cecropin A1 gene and probably other antimicrobial peptide genes. I-kappa-B kinase complex (IKKbeta and key) and PGRP-LC are essential signaling components in transmitting the lipopolysaccharide (LPS) signal leading to cact degradation for NF-kappa-B (rel) activation. Part of a Toll-related receptor pathway that functions in the apoptosis of unfit cells during cell competition. Also part of some antiviral immunity: activated downstream of Sting signaling, which detects double-stranded RNA (dsRNA) from viruses, and promotes expression of antiviral effector genes. May be part of a NF-kappa-B and Tollo signaling cascade that regulates development of the peripheral nervous system. Possibly post-transcriptionally regulates the neuron-specific genes sc and ase, by promoting the rapid turnover of their transcripts in the wing imaginal disk. This is Nuclear factor NF-kappa-B p110 subunit from Drosophila melanogaster (Fruit fly).